A 552-amino-acid polypeptide reads, in one-letter code: Arginine--tRNA ligase (552 aa).

Positions 123–133 match the 'HIGH' region motif; that stretch reads ANPTGPLTIGR.

It belongs to the class-I aminoacyl-tRNA synthetase family. In terms of assembly, monomer.

Its subcellular location is the cytoplasm. The catalysed reaction is tRNA(Arg) + L-arginine + ATP = L-arginyl-tRNA(Arg) + AMP + diphosphate. In Chlorobium luteolum (strain DSM 273 / BCRC 81028 / 2530) (Pelodictyon luteolum), this protein is Arginine--tRNA ligase.